The sequence spans 586 residues: Putative Lon protease homolog (586 aa).

The Lon proteolytic domain maps to 346–543 (GERIGQINAL…TDALPLLLNL (198 aa)). Active-site residues include Ser438 and Lys481.

This sequence belongs to the peptidase S16 family.

This is Putative Lon protease homolog (ycbZ) from Escherichia coli (strain K12).